The primary structure comprises 411 residues: MYPNPLIYCTCWDPWNLGPRKLIKTPHPLPKASIRKPIFPAPISREPNYLLSQPAKSTAFPRDKAQSRKLEESNKAPSEVIEVSPGYKLVRNREQISVTLGDEMFSRKKHLESGILSKVKISRSDIISDLEEQISELSAIIEQMNRDHQSAQKLLSNEMDLRCADMKQKFETESRELKQTHKEQLEKLENSYKETLKVEKAAAQEKLDEMGKEYKYLKNMFHMYQDSIYDEMEDKWSRRKAEWEKDEKMEREKILLQQKHRITKKFELESEEEKRKMNESFSTVMENFTREKEELIRQHNEDILQMQELRKAKEILEAELRTQAVVLETLNTSLYHCQIELQREKTMAGNLEKLFQTKLAEAEEKYKSTIQVLTEENNSLRQKVLTISTNEEIFEERSEKSSSASPNIYES.

Residues 52–77 (SQPAKSTAFPRDKAQSRKLEESNKAP) are disordered. A compositionally biased stretch (basic and acidic residues) spans 61 to 74 (PRDKAQSRKLEESN). Coiled coils occupy residues 124–220 (SDII…LKNM) and 278–328 (NESF…VVLE). The residue at position 353 (Lys-353) is an N6-acetyllysine. A coiled-coil region spans residues 355 to 385 (FQTKLAEAEEKYKSTIQVLTEENNSLRQKVL).

The protein resides in the cytoplasm. It localises to the cytoplasmic granule. Its subcellular location is the cell projection. The protein localises to the cilium. It is found in the flagellum. This chain is Flagellum-associated coiled-coil domain-containing protein 1, found in Rattus norvegicus (Rat).